The chain runs to 443 residues: Tubulin beta chain (443 aa).

GTP-binding residues include Gln11, Glu69, Ser138, Gly142, Thr143, Gly144, Asn204, and Asn226. Position 69 (Glu69) interacts with Mg(2+). Residues 424–443 form a disordered region; it reads QYQDATAEEEGEFEEEEGEN. Acidic residues predominate over residues 429–443; sequence TAEEEGEFEEEEGEN.

Belongs to the tubulin family. Dimer of alpha and beta chains. A typical microtubule is a hollow water-filled tube with an outer diameter of 25 nm and an inner diameter of 15 nM. Alpha-beta heterodimers associate head-to-tail to form protofilaments running lengthwise along the microtubule wall with the beta-tubulin subunit facing the microtubule plus end conferring a structural polarity. Microtubules usually have 13 protofilaments but different protofilament numbers can be found in some organisms and specialized cells. The cofactor is Mg(2+).

It localises to the cytoplasm. The protein resides in the cytoskeleton. Tubulin is the major constituent of microtubules, a cylinder consisting of laterally associated linear protofilaments composed of alpha- and beta-tubulin heterodimers. Microtubules grow by the addition of GTP-tubulin dimers to the microtubule end, where a stabilizing cap forms. Below the cap, tubulin dimers are in GDP-bound state, owing to GTPase activity of alpha-tubulin. The protein is Tubulin beta chain (BETA-TT1) of Tetrahymena pyriformis.